Here is a 764-residue protein sequence, read N- to C-terminus: DNA polymerase 3 (764 aa).

This sequence belongs to the DNA polymerase type-B family.

The catalysed reaction is DNA(n) + a 2'-deoxyribonucleoside 5'-triphosphate = DNA(n+1) + diphosphate. This Saccharolobus solfataricus (strain ATCC 35092 / DSM 1617 / JCM 11322 / P2) (Sulfolobus solfataricus) protein is DNA polymerase 3 (dpo3).